Here is a 534-residue protein sequence, read N- to C-terminus: MIWGVLMMGILLPQCSAHPGFFTSIGQMTDLIHNEKDLVTSLKDYIKAEEDKLEQIKKWAEKLDRLTSTATKDPEGFVGHPVNAFKLMKRLNTEWSELENLILKDMSDGFISNLTIQRQYFPNDEDQVGAAKALFRLQDTYNLDTNTISKGNLPGVKHKSFLTAEDCFELGKVAYTEADYYHTELWMEQALMQLEEGEMSTVDKVSVLDYLSYAVYQQGDLDKALLLTKKLLELDPEHQRANGNLVYFEYIMSKEKDANKSASGDQSDQKTTPKKKGIAVDYLPERQKYEMLCRGEGIKMTPRRQKRLFCRYHDGNRNPKFILAPAKQEDEWDKPRIIRFHDIISDAEIEIVKDLAKPRLSRATVHDPETGKLTTAQYRVSKSAWLSGYEDPVVSRINMRIQDLTGLDVSTAEELQVANYGVGGQYEPHFDFARKDEPDAFRELGTGNRIATWLFYMSDVSAGGATVFPEVGASVWPKKGTAVFWYNLFASGEGDYSTRHAACPVLVGNKWVSNKWLHERGQEFRRPCTLSELE.

An N-terminal signal peptide occupies residues M1–A17. N-linked (GlcNAc...) asparagine glycosylation occurs at N113. The stretch at V205–H238 is one TPR repeat. N259 carries an N-linked (GlcNAc...) asparagine glycan. Positions T411–E519 constitute a Fe2OG dioxygenase domain. 3 residues coordinate Fe cation: H429, D431, and H500. A 2-oxoglutarate-binding site is contributed by K510.

It belongs to the P4HA family. In terms of assembly, heterotetramer of two alpha-1 chains and two beta chains (P4HB)(the beta chain is the multi-functional PDI), where P4HB plays the role of a structural subunit; this tetramer catalyzes the formation of 4-hydroxyproline in collagen. Requires Fe(2+) as cofactor. The cofactor is L-ascorbate.

The protein localises to the endoplasmic reticulum lumen. It carries out the reaction L-prolyl-[collagen] + 2-oxoglutarate + O2 = trans-4-hydroxy-L-prolyl-[collagen] + succinate + CO2. Its function is as follows. Catalyzes the post-translational formation of 4-hydroxyproline in -Xaa-Pro-Gly- sequences in collagens and other proteins. This is Prolyl 4-hydroxylase subunit alpha-1 (P4ha1) from Rattus norvegicus (Rat).